The chain runs to 95 residues: Putative pterin-4-alpha-carbinolamine dehydratase (95 aa).

It belongs to the pterin-4-alpha-carbinolamine dehydratase family.

The enzyme catalyses (4aS,6R)-4a-hydroxy-L-erythro-5,6,7,8-tetrahydrobiopterin = (6R)-L-erythro-6,7-dihydrobiopterin + H2O. The sequence is that of Putative pterin-4-alpha-carbinolamine dehydratase from Prochlorococcus marinus (strain NATL2A).